The sequence spans 365 residues: 3-isopropylmalate dehydrogenase (365 aa).

NAD(+) is bound at residue 78–91; it reads GKKWNNLPIEKRPE. Substrate is bound by residues Arg99, Arg109, Arg139, and Asp228. Residues Asp228, Asp252, and Asp256 each coordinate Mg(2+). Residue 286–298 participates in NAD(+) binding; that stretch reads GSAPDIAGKNIAN.

It belongs to the isocitrate and isopropylmalate dehydrogenases family. LeuB type 1 subfamily. In terms of assembly, homodimer. Mg(2+) is required as a cofactor. Requires Mn(2+) as cofactor.

Its subcellular location is the cytoplasm. The catalysed reaction is (2R,3S)-3-isopropylmalate + NAD(+) = 4-methyl-2-oxopentanoate + CO2 + NADH. The protein operates within amino-acid biosynthesis; L-leucine biosynthesis; L-leucine from 3-methyl-2-oxobutanoate: step 3/4. Catalyzes the oxidation of 3-carboxy-2-hydroxy-4-methylpentanoate (3-isopropylmalate) to 3-carboxy-4-methyl-2-oxopentanoate. The product decarboxylates to 4-methyl-2 oxopentanoate. The sequence is that of 3-isopropylmalate dehydrogenase from Buchnera aphidicola subsp. Macrosiphoniella ludovicianae.